Consider the following 267-residue polypeptide: NAD kinase 2 (267 aa).

The Proton acceptor role is filled by Asp-52. NAD(+)-binding positions include 52–53, 124–125, Arg-151, Asp-153, 164–169, and Ala-188; these read DG, NE, and TGYNKS.

Belongs to the NAD kinase family. A divalent metal cation is required as a cofactor.

The protein localises to the cytoplasm. The enzyme catalyses NAD(+) + ATP = ADP + NADP(+) + H(+). Its function is as follows. Involved in the regulation of the intracellular balance of NAD and NADP, and is a key enzyme in the biosynthesis of NADP. Catalyzes specifically the phosphorylation on 2'-hydroxyl of the adenosine moiety of NAD to yield NADP. The chain is NAD kinase 2 from Geobacillus kaustophilus (strain HTA426).